The primary structure comprises 446 residues: RUN domain-containing protein 3A (446 aa).

Positions 1–298 are interaction with RAP2A; sequence MEASFVQTTM…LQLQLEEAAA (298 aa). Residues 52-189 form the RUN domain; it reads DDSSEEFVNF…IDFSFCLKGE (138 aa). Threonine 215 bears the Phosphothreonine mark. Positions 216–239 are disordered; the sequence is DEEERHSAESSTSEDNSPEHPYLP. At serine 232 the chain carries Phosphoserine. A coiled-coil region spans residues 267 to 322; sequence YLEELVRLRESQLKDLEAENRRLQLQLEEAAAQNQREKRELEGVILELQEQLTGLI. Positions 372 to 384 are enriched in polar residues; sequence PLSAEASLSSDSQ. The segment at 372-404 is disordered; it reads PLSAEASLSSDSQRLGEGTRDEEPWGPIGKDPT. 2 positions are modified to phosphoserine: serine 416 and serine 419.

It belongs to the RUNDC3 family. In terms of assembly, interacts with the GTP-bound form of RAP2A.

Functionally, may act as an effector of RAP2A in neuronal cells. This is RUN domain-containing protein 3A (RUNDC3A) from Homo sapiens (Human).